A 777-amino-acid chain; its full sequence is NAD(P)H-quinone oxidoreductase subunit 5, chloroplastic (777 aa).

Transmembrane regions (helical) follow at residues 9 to 29, 40 to 60, 89 to 109, 125 to 145, 147 to 167, 185 to 205, 220 to 240, 259 to 279, 290 to 312, 328 to 348, 355 to 375, 397 to 417, 426 to 446, 550 to 570, 604 to 624, and 731 to 751; these read WIIPFIPLPVPILIGMGLLLF, WSFPSILLLSMVMLLSVYLSI, IDPLASIMLILITTVGILVLF, FAYLSFFNTSMLGLVTSSNLI, IYIFWELVGMCSYLLIGFWFT, GDFGLLLGILGLYWITGSFEF, NQVHFLFVTLCSFLLFAGAVA, TPISALIHAATMVAAGIFLVA, YIMNLISLIGIITVLLGATLALA, LGYMMLALGMGSYRAALFHLI, ALLFLGSGSIIHSMESIVGYS, TAFLVGTLSLCGIPPLACFWS, WLYSPIFAIIACSTAGFTAFY, LFSLFVLVLFTLFVAAIGIPF, FVTNASFSVSIALLGIFIATF, and IFIFIFLLMDSFFTNLPFFVL.

This sequence belongs to the complex I subunit 5 family. As to quaternary structure, NDH is composed of at least 16 different subunits, 5 of which are encoded in the nucleus.

The protein resides in the plastid. It localises to the chloroplast thylakoid membrane. The catalysed reaction is a plastoquinone + NADH + (n+1) H(+)(in) = a plastoquinol + NAD(+) + n H(+)(out). It carries out the reaction a plastoquinone + NADPH + (n+1) H(+)(in) = a plastoquinol + NADP(+) + n H(+)(out). In terms of biological role, NDH shuttles electrons from NAD(P)H:plastoquinone, via FMN and iron-sulfur (Fe-S) centers, to quinones in the photosynthetic chain and possibly in a chloroplast respiratory chain. The immediate electron acceptor for the enzyme in this species is believed to be plastoquinone. Couples the redox reaction to proton translocation, and thus conserves the redox energy in a proton gradient. This chain is NAD(P)H-quinone oxidoreductase subunit 5, chloroplastic (ndhF), found in Oenothera elata subsp. hookeri (Hooker's evening primrose).